The sequence spans 499 residues: Topoisomerase I damage affected protein 11 (499 aa).

Residues 32–62 form a disordered region; sequence RKTGRKIRSASSNGYRLEHHRTSSAGSMHSQ. Residues 179-231 are a coiled coil; that stretch reads ALLQSLATKELELLECKQKIEDLKKQTQHEEQNYTRRARELHELKEQVSKHLD. Phosphothreonine is present on threonine 236. A phosphoserine mark is found at serine 244 and serine 286. 3 disordered regions span residues 252-306, 332-377, and 400-499; these read LESR…SKQS, WDDS…SVSR, and DVIT…QKLS. The span at 257–287 shows a compositional bias: polar residues; that stretch reads ENAGNSSLPSSVSKPKNMGHQSTNQSRSVSP. The segment covering 290 to 301 has biased composition (basic and acidic residues); that stretch reads IQERRQRDDSSD. Composition is skewed to polar residues over residues 332–359 and 368–377; these read WDDS…QQYD and KSPSQGSVSR. The span at 403–421 shows a compositional bias: basic and acidic residues; sequence TDNRCDPVYKSDRQHEQKK. A compositionally biased stretch (basic residues) spans 470-479; it reads TREKKSKRSS.

It belongs to the TDA11 family.

The protein localises to the cytoplasm. This Saccharomyces cerevisiae (strain Zymaflore VL3) (Baker's yeast) protein is Topoisomerase I damage affected protein 11 (TDA11).